We begin with the raw amino-acid sequence, 876 residues long: Nitrogen regulatory protein areA (876 aa).

Residues Met1–Gly11 are compositionally biased toward gly residues. Disordered regions lie at residues Met1–Ser65, Gln137–Ser159, Ile192–Phe248, Phe393–Gly413, Tyr451–Phe498, and Ser573–Thr672. Polar residues-rich tracts occupy residues Asp198 to Thr211, Gly399 to Gln408, and Gln455 to Gly480. A compositionally biased stretch (basic and acidic residues) spans Val602–Arg611. Over residues Ala615 to Pro640 the composition is skewed to polar residues. The segment at Cys673–Cys697 adopts a GATA-type zinc-finger fold. A DNA-binding region (H-T-H motif) is located at residues Asn721–Lys742. 2 stretches are compositionally biased toward polar residues: residues Ser724–Arg734 and Lys742–Ser766. The interval Ser724 to Asn856 is disordered. Low complexity-rich tracts occupy residues Pro782–Pro798 and Ser828–Ala855.

In terms of assembly, interacts with nmrA.

The protein resides in the nucleus. Transcription activator that binds the consensus DNA element 5'-CGATAG-3' and mediates nitrogen metabolite repression. Activates the transcription of uapA. This is Nitrogen regulatory protein areA (areA) from Emericella nidulans (strain FGSC A4 / ATCC 38163 / CBS 112.46 / NRRL 194 / M139) (Aspergillus nidulans).